Reading from the N-terminus, the 175-residue chain is Disulfide bond formation protein B (175 aa).

At 1-13 (MTAFTRFAHSRAS) the chain is on the cytoplasmic side. A helical transmembrane segment spans residues 14 to 30 (WFILTGSAIALEAAALY). The Periplasmic portion of the chain corresponds to 31-48 (FQYVMKLDPCVMCIYQRL). Cys40 and Cys43 are disulfide-bonded. A helical transmembrane segment spans residues 49 to 64 (AVFGILASGLIGMTAP). The Cytoplasmic segment spans residues 65–71 (KFLIVRI). The helical transmembrane segment at 72 to 89 (LGAIGWAVSATWGLKLAL) threads the bilayer. Residues 90 to 144 (ALVDMQNNPSPFSTCSFLPEFPAWMPLHEWFPSVMLPTGMCTDVPWQFMGVTMAE) lie on the Periplasmic side of the membrane. A disulfide bridge links Cys104 with Cys130. Residues 145 to 163 (WMVVAFSGYLVALLLFIVP) traverse the membrane as a helical segment. The Cytoplasmic portion of the chain corresponds to 164 to 175 (ILSGSNKPSLYK).

It belongs to the DsbB family.

It localises to the cell inner membrane. Functionally, required for disulfide bond formation in some periplasmic proteins. Acts by oxidizing the DsbA protein. This chain is Disulfide bond formation protein B, found in Shewanella sp. (strain ANA-3).